A 129-amino-acid polypeptide reads, in one-letter code: 4-amino-4-deoxychorismate mutase (129 aa).

The Chorismate mutase domain occupies 16–107; that stretch reads AAATDPLDAL…ETCRLEDEWI (92 aa).

The catalysed reaction is 4-amino-4-deoxychorismate = 4-amino-4-deoxyprephenate. It functions in the pathway antibiotic biosynthesis. Its function is as follows. Involved in pristinamycin I biosynthesis. Probably catalyzes the conversion of 4-amino-4-deoxychorismate to 4-amino-4-deoxyprephenate. The chain is 4-amino-4-deoxychorismate mutase from Streptomyces pristinaespiralis.